Consider the following 452-residue polypeptide: Protein henna (452 aa).

In terms of domain architecture, ACT spans 36 to 107 (FSPKDSSLSS…EQCSYFNIIS (72 aa)). The residue at position 272 (serine 272) is a Phosphoserine; by CaMK2. Fe cation is bound by residues histidine 284, histidine 289, and glutamate 329.

It belongs to the biopterin-dependent aromatic amino acid hydroxylase family. The cofactor is Fe(2+). As to expression, phenylalanine hydrolase activity is found in yolk granules of embryos, and female abdomen and fat body tissues. Tryptophan hydroxylase is expressed in serotonergic neurons. Both enzymes are present in cuticular tissues.

It catalyses the reaction (6R)-L-erythro-5,6,7,8-tetrahydrobiopterin + L-phenylalanine + O2 = (4aS,6R)-4a-hydroxy-L-erythro-5,6,7,8-tetrahydrobiopterin + L-tyrosine. It carries out the reaction (6R)-L-erythro-5,6,7,8-tetrahydrobiopterin + L-tryptophan + O2 = 5-hydroxy-L-tryptophan + (4aS,6R)-4a-hydroxy-L-erythro-5,6,7,8-tetrahydrobiopterin. It functions in the pathway amino-acid degradation; L-phenylalanine degradation; acetoacetate and fumarate from L-phenylalanine: step 1/6. Its activity is regulated as follows. N-terminal region of PAH is thought to contain allosteric binding sites for phenylalanine and to constitute an 'inhibitory' domain that regulates the activity of a catalytic domain in the C-terminal portion of the molecule. The polypeptide is Protein henna (Hn) (Drosophila melanogaster (Fruit fly)).